A 536-amino-acid chain; its full sequence is 2-isopropylmalate synthase (536 aa).

Residues 8–273 form the Pyruvate carboxyltransferase domain; sequence VLIFDTTLRD…FFGKDSESPT (266 aa). Mn(2+) contacts are provided by Asp-17, His-208, His-210, and Asn-244. A regulatory domain region spans residues 408–536; sequence KLHLVQVSCG…PQHDVVKANL (129 aa).

Belongs to the alpha-IPM synthase/homocitrate synthase family. LeuA type 1 subfamily. As to quaternary structure, homodimer. It depends on Mn(2+) as a cofactor.

Its subcellular location is the cytoplasm. The catalysed reaction is 3-methyl-2-oxobutanoate + acetyl-CoA + H2O = (2S)-2-isopropylmalate + CoA + H(+). Its pathway is amino-acid biosynthesis; L-leucine biosynthesis; L-leucine from 3-methyl-2-oxobutanoate: step 1/4. Catalyzes the condensation of the acetyl group of acetyl-CoA with 3-methyl-2-oxobutanoate (2-ketoisovalerate) to form 3-carboxy-3-hydroxy-4-methylpentanoate (2-isopropylmalate). The chain is 2-isopropylmalate synthase from Prochlorococcus marinus (strain SARG / CCMP1375 / SS120).